Reading from the N-terminus, the 326-residue chain is ELMO domain-containing protein 1 (326 aa).

The 174-residue stretch at Gln-133–Leu-306 folds into the ELMO domain.

Its function is as follows. Acts as a GTPase-activating protein (GAP) toward guanine nucleotide exchange factors like ARL2, ARL3, ARF1 and ARF6, but not for GTPases outside the Arf family. This is ELMO domain-containing protein 1 (ELMOD1) from Bos taurus (Bovine).